Consider the following 1344-residue polypeptide: Protein stu1 (1344 aa).

An HEAT 1 repeat occupies 93 to 131 (LYPLLVERLGDHKERIRAQAAQSFTDMWLAAPEEVEQCV). Positions 265–292 (HRPVSRAETQASRSVSRLDTHQRPASRM) are disordered. The HEAT 2 repeat unit spans residues 508–544 (VTFTTRILQHVSGACQDKNVQLRLFAAGWLKTLIQKQ). 5 disordered regions span residues 606–637 (RSLL…ANGT), 651–847 (AAQK…STPR), 914–945 (LTEN…ESVP), 984–1004 (PVTH…LSSS), and 1031–1054 (SLPH…PSQR). 2 stretches are compositionally biased toward polar residues: residues 691-705 (VRTV…SLSS) and 735-747 (ATDS…NQID). Residues 748 to 769 (GSPSAAKSKSSTPSLKSVSSTG) show a composition bias toward low complexity. 2 stretches are compositionally biased toward polar residues: residues 828–847 (FSVT…STPR) and 914–942 (LTEN…NQDE). Low complexity predominate over residues 995–1004 (SSKPSGLSSS).

This sequence belongs to the CLASP family. As to quaternary structure, interacts with microtubules.

The protein localises to the cytoplasm. Its subcellular location is the cytoskeleton. It localises to the nucleus. The protein resides in the spindle. In terms of biological role, microtubule binding protein that promotes the stabilization of dynamic microtubules. Required for mitotic spindle formation. This is Protein stu1 (stu1) from Aspergillus fumigatus (strain ATCC MYA-4609 / CBS 101355 / FGSC A1100 / Af293) (Neosartorya fumigata).